A 103-amino-acid polypeptide reads, in one-letter code: Large ribosomal subunit protein bL32m (103 aa).

Residues 1 to 47 constitute a mitochondrion transit peptide; it reads MALLRGNSLAISQKMLSVFQASALPHISLRIFISPPSIANIWNSILL. Residues Cys-77, Cys-80, Cys-90, and Cys-93 each coordinate Zn(2+).

The protein belongs to the bacterial ribosomal protein bL32 family. In terms of assembly, component of the mitochondrial large ribosomal subunit (mt-LSU). Mature yeast 74S mitochondrial ribosomes consist of a small (37S) and a large (54S) subunit. The 37S small subunit contains a 15S ribosomal RNA (15S mt-rRNA) and at least 32 different proteins. The 54S large subunit contains a 21S rRNA (21S mt-rRNA) and at least 45 different proteins. bL32m has a zinc binding site. Post-translationally, MRPL32 precursor is processed by the m-AAA protease, which cleaves the N-terminal transit peptide. Cleavage by the m-AAA protease takes place prior to assembly into the large subunit, an essential step for mitochondrial ribosome (mitoribosome) assembly. Proper processing by the m-AAA protease is dependent on the zinc-binding region within the tightly folded C-terminal domain of MRPL32: zinc-dependent folding halts degradation initiated from the N-terminus and triggers the release of mature mrpl32.

The protein resides in the mitochondrion. In terms of biological role, component of the mitochondrial ribosome (mitoribosome), a dedicated translation machinery responsible for the synthesis of mitochondrial genome-encoded proteins, including at least some of the essential transmembrane subunits of the mitochondrial respiratory chain. The mitoribosomes are attached to the mitochondrial inner membrane and translation products are cotranslationally integrated into the membrane. The polypeptide is Large ribosomal subunit protein bL32m (mrpl32) (Schizosaccharomyces pombe (strain 972 / ATCC 24843) (Fission yeast)).